A 158-amino-acid polypeptide reads, in one-letter code: SsrA-binding protein (158 aa).

Positions Lys-130–Gly-158 are disordered. Residues Asp-136–Gly-158 are compositionally biased toward basic and acidic residues.

This sequence belongs to the SmpB family.

It localises to the cytoplasm. Functionally, required for rescue of stalled ribosomes mediated by trans-translation. Binds to transfer-messenger RNA (tmRNA), required for stable association of tmRNA with ribosomes. tmRNA and SmpB together mimic tRNA shape, replacing the anticodon stem-loop with SmpB. tmRNA is encoded by the ssrA gene; the 2 termini fold to resemble tRNA(Ala) and it encodes a 'tag peptide', a short internal open reading frame. During trans-translation Ala-aminoacylated tmRNA acts like a tRNA, entering the A-site of stalled ribosomes, displacing the stalled mRNA. The ribosome then switches to translate the ORF on the tmRNA; the nascent peptide is terminated with the 'tag peptide' encoded by the tmRNA and targeted for degradation. The ribosome is freed to recommence translation, which seems to be the essential function of trans-translation. This Ruegeria sp. (strain TM1040) (Silicibacter sp.) protein is SsrA-binding protein.